Consider the following 255-residue polypeptide: Acetylglutamate kinase (255 aa).

Residues 40–41 (GG), arginine 62, and asparagine 153 contribute to the substrate site.

This sequence belongs to the acetylglutamate kinase family. ArgB subfamily.

Its subcellular location is the cytoplasm. It carries out the reaction N-acetyl-L-glutamate + ATP = N-acetyl-L-glutamyl 5-phosphate + ADP. It participates in amino-acid biosynthesis; L-arginine biosynthesis; N(2)-acetyl-L-ornithine from L-glutamate: step 2/4. Its function is as follows. Catalyzes the ATP-dependent phosphorylation of N-acetyl-L-glutamate. This Bacillus cereus (strain AH820) protein is Acetylglutamate kinase.